A 242-amino-acid polypeptide reads, in one-letter code: N-glycosylase/DNA lyase (242 aa).

8-oxoguanine is bound by residues Gln26, Ser53, and Trp64. The segment at 120–184 is helix-hairpin-helix; sequence EGYYKNMKML…EDLRIKSVTS (65 aa). Lys144 functions as the Schiff-base intermediate with DNA in the catalytic mechanism. Residues Phe148 and Pro174 each contribute to the 8-oxoguanine site. The active site involves Asp176. Residues Asp210 and Trp214 each coordinate 8-oxoguanine.

It belongs to the archaeal N-glycosylase/DNA lyase (AGOG) family.

The enzyme catalyses 2'-deoxyribonucleotide-(2'-deoxyribose 5'-phosphate)-2'-deoxyribonucleotide-DNA = a 3'-end 2'-deoxyribonucleotide-(2,3-dehydro-2,3-deoxyribose 5'-phosphate)-DNA + a 5'-end 5'-phospho-2'-deoxyribonucleoside-DNA + H(+). In terms of biological role, DNA repair enzyme that is part of the base excision repair (BER) pathway; protects from oxidative damage by removing the major product of DNA oxidation, 8-oxoguanine (GO), from single- and double-stranded DNA substrates. This is N-glycosylase/DNA lyase from Pyrococcus furiosus (strain ATCC 43587 / DSM 3638 / JCM 8422 / Vc1).